A 261-amino-acid chain; its full sequence is uncharacterized protein (261 aa).

The next 2 membrane-spanning stretches (helical) occupy residues 4–21 and 33–55; these read RLIA…LIVL and FSIL…LVLF.

Its subcellular location is the cell membrane. This is an uncharacterized protein from Archaeoglobus fulgidus (strain ATCC 49558 / DSM 4304 / JCM 9628 / NBRC 100126 / VC-16).